The chain runs to 546 residues: MSKDPGRILIFDTTLRDGEQSPGASLNLEEKLAIAHQLARLGVDVIEAGFPFASPGDFKAVNKIAEVVGGENGPIICGLARASTNDIKACYEAISPAPKKRIHTFIATSDIHLKHKLRKTRSDVLCIVPEMVSYAKSLVDDIEFSCEDASRSDPEFLYEVIQLAITSGATTINIPDTVGFTTPSEFGKLIFDINKNVPNIDEAIISVHGHNDLGLAVANFLEAAKNGARQLECTINGIGERAGNASLEELVMALHVRKSFFNSFFGRSSDSPTPLTAIRTEEITKTSRLVSNLTGMNVQPNKAIVGANAFAHESGIHQDGVLKNRLTYEIIDAKTVGLNDNKISLGKLSGRSAVRARLEEMGYDLSREDLNDAFARFKELADRKREITDRDLEAIVSEQVQLPESKFQLSHVQVSCGSTSKPTATVTLINTEDHTEDTAVAIGTGPVDAVCEALNALTKVPNELIEFSVKSVTEGIDALGEVTIRIRNKNKIYSGHSADTDVVVAAANAFVNALNRLVFSEKKNSIHPQFDDLENPKNKVLSNPKK.

Positions 8 to 271 (ILIFDTTLRD…NSFFGRSSDS (264 aa)) constitute a Pyruvate carboxyltransferase domain. Mn(2+) is bound by residues Asp17, His208, His210, and Asn244. Positions 408–546 (QLSHVQVSCG…KNKVLSNPKK (139 aa)) are regulatory domain.

The protein belongs to the alpha-IPM synthase/homocitrate synthase family. LeuA type 1 subfamily. In terms of assembly, homodimer. The cofactor is Mn(2+).

It is found in the cytoplasm. The enzyme catalyses 3-methyl-2-oxobutanoate + acetyl-CoA + H2O = (2S)-2-isopropylmalate + CoA + H(+). It participates in amino-acid biosynthesis; L-leucine biosynthesis; L-leucine from 3-methyl-2-oxobutanoate: step 1/4. In terms of biological role, catalyzes the condensation of the acetyl group of acetyl-CoA with 3-methyl-2-oxobutanoate (2-ketoisovalerate) to form 3-carboxy-3-hydroxy-4-methylpentanoate (2-isopropylmalate). This chain is 2-isopropylmalate synthase, found in Prochlorococcus marinus subsp. pastoris (strain CCMP1986 / NIES-2087 / MED4).